A 153-amino-acid polypeptide reads, in one-letter code: Nucleoside diphosphate kinase (153 aa).

Lys-13, Phe-61, Arg-89, Thr-95, Arg-106, and Asn-116 together coordinate ATP. The Pros-phosphohistidine intermediate role is filled by His-119.

Belongs to the NDK family. It depends on Mg(2+) as a cofactor.

The protein localises to the cytoplasm. It localises to the cell membrane. The catalysed reaction is a 2'-deoxyribonucleoside 5'-diphosphate + ATP = a 2'-deoxyribonucleoside 5'-triphosphate + ADP. It catalyses the reaction a ribonucleoside 5'-diphosphate + ATP = a ribonucleoside 5'-triphosphate + ADP. Its function is as follows. Major role in the synthesis of nucleoside triphosphates other than ATP. The ATP gamma phosphate is transferred to the NDP beta phosphate via a ping-pong mechanism, using a phosphorylated active-site intermediate. This chain is Nucleoside diphosphate kinase, found in Gallus gallus (Chicken).